The chain runs to 270 residues: Proteasome inhibitor PI31 subunit (270 aa).

Ala-2 is subject to N-acetylalanine. The interval 2-150 (AGLEVLFASA…PIHEQWEKAN (149 aa)) is important for homodimerization and interaction with FBXO7. Ser-152 carries the phosphoserine modification. Position 204 is an omega-N-methylarginine (Arg-204). Arg-218 carries the asymmetric dimethylarginine modification. Residues 220-270 (LIDPSSGLPNRLPPGAVPPGARFDPFGPIGTSPSGPNPDHLPPPGYDDMYL) form a disordered region. The residue at position 230 (Arg-230) is an Omega-N-methylarginine. Phosphoserine is present on Ser-251. The span at 254-264 (GPNPDHLPPPG) shows a compositional bias: pro residues.

Belongs to the proteasome inhibitor PI31 family. As to quaternary structure, monomer and homodimer. Interacts with FBXO7.

It is found in the cytoplasm. It localises to the endoplasmic reticulum. In terms of biological role, plays an important role in control of proteasome function. Inhibits the hydrolysis of protein and peptide substrates by the 20S proteasome. Also inhibits the activation of the proteasome by the proteasome regulatory proteins PA700 and PA28. The polypeptide is Proteasome inhibitor PI31 subunit (PSMF1) (Bos taurus (Bovine)).